We begin with the raw amino-acid sequence, 112 residues long: Serum amyloid A protein (112 aa).

Glutamine 1 carries the post-translational modification Pyrrolidone carboxylic acid. Residues methionine 75–alanine 86 are compositionally biased toward basic and acidic residues. The tract at residues methionine 75–tyrosine 112 is disordered.

This sequence belongs to the SAA family. In terms of tissue distribution, expressed by the liver; secreted in plasma.

Its subcellular location is the secreted. Functionally, major acute phase reactant. Apolipoprotein of the HDL complex. In Ovis aries (Sheep), this protein is Serum amyloid A protein (SAA1).